Consider the following 329-residue polypeptide: Ketol-acid reductoisomerase (NADP(+)) (329 aa).

The KARI N-terminal Rossmann domain maps to 2–182 (TQLFYDTDAD…GGTRAGILET (181 aa)). Residues 25–28 (YGSQ), Ser51, Ser53, and 83–86 (DEFQ) contribute to the NADP(+) site. Residue His108 is part of the active site. NADP(+) is bound at residue Gly134. Residues 183 to 328 (NFKEETETDL…KGLRSMFSWL (146 aa)) form the KARI C-terminal knotted domain. Mg(2+) is bound by residues Asp191, Glu195, Glu227, and Glu231. Position 252 (Ser252) interacts with substrate.

Belongs to the ketol-acid reductoisomerase family. Mg(2+) is required as a cofactor.

The catalysed reaction is (2R)-2,3-dihydroxy-3-methylbutanoate + NADP(+) = (2S)-2-acetolactate + NADPH + H(+). It catalyses the reaction (2R,3R)-2,3-dihydroxy-3-methylpentanoate + NADP(+) = (S)-2-ethyl-2-hydroxy-3-oxobutanoate + NADPH + H(+). Its pathway is amino-acid biosynthesis; L-isoleucine biosynthesis; L-isoleucine from 2-oxobutanoate: step 2/4. The protein operates within amino-acid biosynthesis; L-valine biosynthesis; L-valine from pyruvate: step 2/4. Involved in the biosynthesis of branched-chain amino acids (BCAA). Catalyzes an alkyl-migration followed by a ketol-acid reduction of (S)-2-acetolactate (S2AL) to yield (R)-2,3-dihydroxy-isovalerate. In the isomerase reaction, S2AL is rearranged via a Mg-dependent methyl migration to produce 3-hydroxy-3-methyl-2-ketobutyrate (HMKB). In the reductase reaction, this 2-ketoacid undergoes a metal-dependent reduction by NADPH to yield (R)-2,3-dihydroxy-isovalerate. This is Ketol-acid reductoisomerase (NADP(+)) from Prochlorococcus marinus (strain MIT 9215).